Reading from the N-terminus, the 268-residue chain is Undecaprenyl-diphosphatase (268 aa).

The next 8 helical transmembrane spans lie at 4–24, 50–70, 84–104, 109–129, 144–164, 184–204, 214–234, and 245–265; these read STTL…FIPV, IQLG…ISVI, AAVL…HGFI, FETP…LLFV, VPLG…VPGV, AAEF…AFDL, GALG…VLVV, and GYSL…AALL.

Belongs to the UppP family.

The protein resides in the cell inner membrane. The enzyme catalyses di-trans,octa-cis-undecaprenyl diphosphate + H2O = di-trans,octa-cis-undecaprenyl phosphate + phosphate + H(+). Catalyzes the dephosphorylation of undecaprenyl diphosphate (UPP). Confers resistance to bacitracin. In Cereibacter sphaeroides (strain ATCC 17025 / ATH 2.4.3) (Rhodobacter sphaeroides), this protein is Undecaprenyl-diphosphatase.